The chain runs to 288 residues: Nucleotide-binding protein Veis_1053 (288 aa).

10 to 17 (GMSGSGKS) lines the ATP pocket. A GTP-binding site is contributed by 59 to 62 (DVRS).

It belongs to the RapZ-like family.

Its function is as follows. Displays ATPase and GTPase activities. This chain is Nucleotide-binding protein Veis_1053, found in Verminephrobacter eiseniae (strain EF01-2).